We begin with the raw amino-acid sequence, 269 residues long: MNKKTRIAITGPIGRMGRMLIKEIQNNKHSHLTVAVVQKKHQLIGQDIGRIIGIGEIGVLISDELNIKKNDFDVLIDFTRPAGTLEYLKYCNKFKKNIVIGTTGFSKEEIDIIKSYSQKIAIIIASNFSIGINLLFQLIKKTTQIIGKDSDINILEYHHRNKIDAPSGTALEIGEVISKVMNWNLNQDSIYYQKGITGIRDAKKIGFSIVRAGNIVGKHTVMFSSCDEEIKITHTASNRMSFARGAIQSALWIHKKNTGLFDMTDVLSL.

11 to 16 (GPIGRM) serves as a coordination point for NAD(+). NADP(+) is bound at residue Lys39. NAD(+) contacts are provided by residues 101 to 103 (GTT) and 125 to 128 (ASNF). The active-site Proton donor/acceptor is His158. Residue His159 participates in (S)-2,3,4,5-tetrahydrodipicolinate binding. The active-site Proton donor is Lys162. 168–169 (GT) is a binding site for (S)-2,3,4,5-tetrahydrodipicolinate.

The protein belongs to the DapB family. In terms of assembly, homotetramer.

The protein localises to the cytoplasm. It catalyses the reaction (S)-2,3,4,5-tetrahydrodipicolinate + NAD(+) + H2O = (2S,4S)-4-hydroxy-2,3,4,5-tetrahydrodipicolinate + NADH + H(+). It carries out the reaction (S)-2,3,4,5-tetrahydrodipicolinate + NADP(+) + H2O = (2S,4S)-4-hydroxy-2,3,4,5-tetrahydrodipicolinate + NADPH + H(+). It participates in amino-acid biosynthesis; L-lysine biosynthesis via DAP pathway; (S)-tetrahydrodipicolinate from L-aspartate: step 4/4. In terms of biological role, catalyzes the conversion of 4-hydroxy-tetrahydrodipicolinate (HTPA) to tetrahydrodipicolinate. The sequence is that of 4-hydroxy-tetrahydrodipicolinate reductase from Buchnera aphidicola subsp. Acyrthosiphon pisum (strain 5A).